A 445-amino-acid chain; its full sequence is Protein cereblon (445 aa).

The disordered stretch occupies residues 1-48 (MAGEGDQQDAAHNMGNHLPLLPADSEDEDDEIEMEVEDQDSKEARKPN). Residues 24–38 (DSEDEDDEIEMEVED) are compositionally biased toward acidic residues. Serine 25 carries the post-translational modification Phosphoserine. One can recognise a Lon N-terminal domain in the interval 84-322 (IPVLPEVLMI…CELDIMNKCT (239 aa)). In terms of domain architecture, CULT spans 321 to 429 (CTSLCCKQCQ…LTRSALLPTI (109 aa)). Residues cysteine 326 and cysteine 329 each contribute to the Zn(2+) site. (S)-thalidomide is bound by residues histidine 381, tryptophan 383, and tryptophan 389. Residues cysteine 394 and cysteine 397 each contribute to the Zn(2+) site.

Belongs to the CRBN family. As to quaternary structure, component of a DCX (DDB1-CUL4-X-box) protein ligase complex, at least composed of CRBN, CUL4A, DDB1 and RBX1. Interacts directly with DDB1. Interacts with KCNT1. Interacts with ILF2. Interacts with TRAF6 and ECSIT. In terms of processing, ubiquitinated, ubiquitination is mediated by its own DCX protein ligase complex. Highly expressed in brain.

It localises to the cytoplasm. Its subcellular location is the nucleus. The protein localises to the membrane. It participates in protein modification; protein ubiquitination. Substrate recognition component of a DCX (DDB1-CUL4-X-box) E3 protein ligase complex that mediates the ubiquitination and subsequent proteasomal degradation of target proteins, such as MEIS2, ILF2 or GLUL. Normal degradation of key regulatory proteins is required for normal limb outgrowth and expression of the fibroblast growth factor FGF8. Maintains presynaptic glutamate release and consequently, cognitive functions such as memory and learning, by negatively regulating large-conductance calcium-activated potassium (BK) channels in excitatory neurons. Likely to function by regulating the assembly and neuronal surface expression of BK channels via its interaction with KCNT1. May also be involved in regulating anxiety-like behaviors via a BK channel-independent mechanism. Plays a negative role in TLR4 signaling by interacting with TRAF6 and ECSIT, leading to inhibition of ECSIT ubiquitination, an important step of the signaling. In Mus musculus (Mouse), this protein is Protein cereblon (Crbn).